Here is a 1576-residue protein sequence, read N- to C-terminus: ABC transporter ALT5 (1576 aa).

10 helical membrane-spanning segments follow: residues 27-47 (LKFE…ILAV), 72-92 (ILGF…TQGT), 99-119 (GLFL…VIVC), 267-287 (LPLS…PILP), 289-309 (LVLI…TGFL), 321-341 (GLIG…SLYW), 387-407 (VLAG…AVIV), 417-437 (GFFA…ATVG), 500-520 (ITAM…TLAA), and 525-545 (VATS…APLG). The ABC transmembrane type-1 1 domain maps to 289 to 556 (LVLIGLSISQ…LFQSVAPLMS (268 aa)). Positions 602–834 (FRVVNGSFRW…NGGYLQSLCV (233 aa)) constitute an ABC transporter 1 domain. 636 to 643 (GPVGSGKS) serves as a coordination point for ATP. 7 consecutive transmembrane segments (helical) span residues 915-935 (VVAL…FAFP), 957-977 (FWVG…FLTM), 981-1001 (VTSI…AAIM), 1035-1054 (LIQF…VLAA), 1060-1078 (AAMY…KLYL), 1142-1162 (WLLF…VTLV), and 1171-1191 (GFAG…ASAM). Residues 919 to 1199 (VAFLASAICY…AMQSYAKLET (281 aa)) enclose the ABC transmembrane type-1 2 domain. Residues 1236 to 1567 (IKLDGVSASY…SHSKFRALCE (332 aa)) enclose the ABC transporter 2 domain. Residue 1278–1285 (GRSGSGKS) participates in ATP binding.

It belongs to the ABC transporter superfamily. ABCC family. Conjugate transporter (TC 3.A.1.208) subfamily.

The protein resides in the cell membrane. Functionally, ABC transporter that may provide the dual role AAL-toxin export and self-protection by allowing the fungus to evade the harmful effect of its own AAL-toxin production. This Alternaria alternata (Alternaria rot fungus) protein is ABC transporter ALT5.